The sequence spans 281 residues: 3-mercaptopyruvate sulfurtransferase (281 aa).

2 consecutive Rhodanese domains span residues 17–135 (DDPE…LLEE) and 165–278 (HENT…LPVE). Arg179 serves as a coordination point for substrate. The active-site Cysteine persulfide intermediate is the Cys238. Residues 238–244 (CGSGVTA) form a substrate specificity region.

It is found in the cytoplasm. It carries out the reaction 2-oxo-3-sulfanylpropanoate + [thioredoxin]-dithiol = [thioredoxin]-disulfide + hydrogen sulfide + pyruvate + H(+). Catalyzes the transfer of sulfur from 3-mercaptopyruvate to a thiol-containing acceptor to form an intramolecular disulfide releasing hydrogen sulfide and pyruvate. The protein is 3-mercaptopyruvate sulfurtransferase (sseA) of Escherichia coli O157:H7.